An 84-amino-acid polypeptide reads, in one-letter code: Transmembrane protein EP84R (84 aa).

2 helical membrane passes run 31–51 (VIGV…IIIL) and 60–80 (AASI…FLIY).

It belongs to the asfivirus EP84R family.

It localises to the virion membrane. In Ornithodoros (relapsing fever ticks), this protein is Transmembrane protein EP84R.